Reading from the N-terminus, the 333-residue chain is Serine proteinase inhibitor 2 (333 aa).

The protein belongs to the serpin family. Poxviruses subfamily.

Its subcellular location is the host cytoplasm. Functionally, weak inhibitor of the interleukin-1-beta converting enzyme (ICE) and of granzyme B. Does not form a stable complex with ICE, but can for a stable complex with granzyme B. The protein is Serine proteinase inhibitor 2 (SERP2) of Myxoma virus (strain Uriarra) (MYXV).